The primary structure comprises 128 residues: Small ribosomal subunit protein bS6 (128 aa).

The tract at residues 100–128 (SPMAKAKEERFTRRDDERREEATEAASEE) is disordered. Basic and acidic residues predominate over residues 104–121 (KAKEERFTRRDDERREEA).

The protein belongs to the bacterial ribosomal protein bS6 family.

In terms of biological role, binds together with bS18 to 16S ribosomal RNA. The sequence is that of Small ribosomal subunit protein bS6 from Aeromonas hydrophila subsp. hydrophila (strain ATCC 7966 / DSM 30187 / BCRC 13018 / CCUG 14551 / JCM 1027 / KCTC 2358 / NCIMB 9240 / NCTC 8049).